We begin with the raw amino-acid sequence, 145 residues long: Large ribosomal subunit protein uL16 (145 aa).

The protein belongs to the universal ribosomal protein uL16 family. In terms of assembly, part of the 50S ribosomal subunit.

Functionally, binds 23S rRNA and is also seen to make contacts with the A and possibly P site tRNAs. This chain is Large ribosomal subunit protein uL16, found in Exiguobacterium sibiricum (strain DSM 17290 / CCUG 55495 / CIP 109462 / JCM 13490 / 255-15).